A 525-amino-acid chain; its full sequence is Keratin, type II cytoskeletal 4 (525 aa).

Residues 1–145 (MIARQSSVRG…DPEIQKIRTA (145 aa)) form a head region. Arg13 is subject to Omega-N-methylarginine. The interval 146–181 (EREQIKTLNNKFASFIDKVRFLEQQNKVLETKWNLL) is coil 1A. One can recognise an IF rod domain in the interval 146–459 (EREQIKTLNN…KLLEGEECRM (314 aa)). The segment at 182–200 (QQQTTTTSPKSLDPFFETY) is linker 1. Residues 201–292 (INALRKNLDT…VLYEAELAQM (92 aa)) are coil 1B. A linker 12 region spans residues 293-316 (QTHVSDTSVVLSMDNNRNLDLDGI). The tract at residues 317–455 (IAEVRAQYED…ATYRKLLEGE (139 aa)) is coil 2. A tail region spans residues 456–524 (ECRMSGECKS…SSATITKRSP (69 aa)).

This sequence belongs to the intermediate filament family. In terms of assembly, heterotetramer of two type I and two type II keratins. Keratin-4 is generally associated with keratin-13. Expressed in the dorsal and ventral epithelium of the tongue. Highest expression levels are detected in the suprabasal layer with low levels detected in the basal cell layer. Within the suprabasal layer expression is highest in the spinous cells, decreases in the granular cells and is not detected in the stratum corneum.

The chain is Keratin, type II cytoskeletal 4 (Krt4) from Mus musculus (Mouse).